Consider the following 122-residue polypeptide: Large ribosomal subunit protein uL14 (122 aa).

Belongs to the universal ribosomal protein uL14 family. As to quaternary structure, part of the 50S ribosomal subunit. Forms a cluster with proteins L3 and L19. In the 70S ribosome, L14 and L19 interact and together make contacts with the 16S rRNA in bridges B5 and B8.

Its function is as follows. Binds to 23S rRNA. Forms part of two intersubunit bridges in the 70S ribosome. The polypeptide is Large ribosomal subunit protein uL14 (Bacillus mycoides (strain KBAB4) (Bacillus weihenstephanensis)).